Here is a 530-residue protein sequence, read N- to C-terminus: Bifunctional purine biosynthesis protein PurH (530 aa).

Residues 1-148 (MNNARPIHRA…KNHKDVAIVV (148 aa)) enclose the MGS-like domain.

It belongs to the PurH family.

The enzyme catalyses (6R)-10-formyltetrahydrofolate + 5-amino-1-(5-phospho-beta-D-ribosyl)imidazole-4-carboxamide = 5-formamido-1-(5-phospho-D-ribosyl)imidazole-4-carboxamide + (6S)-5,6,7,8-tetrahydrofolate. It catalyses the reaction IMP + H2O = 5-formamido-1-(5-phospho-D-ribosyl)imidazole-4-carboxamide. Its pathway is purine metabolism; IMP biosynthesis via de novo pathway; 5-formamido-1-(5-phospho-D-ribosyl)imidazole-4-carboxamide from 5-amino-1-(5-phospho-D-ribosyl)imidazole-4-carboxamide (10-formyl THF route): step 1/1. The protein operates within purine metabolism; IMP biosynthesis via de novo pathway; IMP from 5-formamido-1-(5-phospho-D-ribosyl)imidazole-4-carboxamide: step 1/1. The sequence is that of Bifunctional purine biosynthesis protein PurH from Vibrio cholerae serotype O1 (strain ATCC 39541 / Classical Ogawa 395 / O395).